A 90-amino-acid chain; its full sequence is uncharacterized protein (90 aa).

The N-terminal stretch at 1 to 18 (MSRALFAVVLAFPLIALA) is a signal peptide.

This is an uncharacterized protein from Escherichia coli (strain K12).